A 440-amino-acid chain; its full sequence is Argininosuccinate lyase (440 aa).

This sequence belongs to the lyase 1 family. Argininosuccinate lyase subfamily.

The protein localises to the cytoplasm. The enzyme catalyses 2-(N(omega)-L-arginino)succinate = fumarate + L-arginine. It functions in the pathway amino-acid biosynthesis; L-arginine biosynthesis; L-arginine from L-ornithine and carbamoyl phosphate: step 3/3. The sequence is that of Argininosuccinate lyase from Clostridium botulinum (strain Loch Maree / Type A3).